The sequence spans 428 residues: UPF0229 protein YeaH (428 aa).

Over residues 78-90 (GNDHFIQNDRIER) the composition is skewed to basic and acidic residues. The disordered stretch occupies residues 78-111 (GNDHFIQNDRIERPQGGGGGGSGSGQGQASQDGE). Over residues 92–103 (QGGGGGGSGSGQ) the composition is skewed to gly residues.

This sequence belongs to the UPF0229 family.

The sequence is that of UPF0229 protein YeaH from Salmonella heidelberg (strain SL476).